Consider the following 280-residue polypeptide: 4-diphosphocytidyl-2-C-methyl-D-erythritol kinase (280 aa).

Residue Lys-8 is part of the active site. 91-101 lines the ATP pocket; it reads PVSAGLAGGSS. The active site involves Asp-133.

It belongs to the GHMP kinase family. IspE subfamily.

It carries out the reaction 4-CDP-2-C-methyl-D-erythritol + ATP = 4-CDP-2-C-methyl-D-erythritol 2-phosphate + ADP + H(+). It participates in isoprenoid biosynthesis; isopentenyl diphosphate biosynthesis via DXP pathway; isopentenyl diphosphate from 1-deoxy-D-xylulose 5-phosphate: step 3/6. Its function is as follows. Catalyzes the phosphorylation of the position 2 hydroxy group of 4-diphosphocytidyl-2C-methyl-D-erythritol. This Clostridium novyi (strain NT) protein is 4-diphosphocytidyl-2-C-methyl-D-erythritol kinase.